Here is a 590-residue protein sequence, read N- to C-terminus: MLRIAQALDTQLREAMQRAFPDVDALLDPQLAPANKPEFGDFQANGALPLAKPLKQAPRLIAGAIVEALQADPAFAALCLEPQIAGPGFINLTIRPERLAAEVSARLGDPRLGVPEVQSDAAVVVDFSSPNIAKEMHVGHLRSTIIGDSLARVLEFRGHRVLRLNHVGDWGTQFGMLITHLKQVAPETLNRADAVDLGDLVAFYREAKKRFDEDEAFQATSREEVVKLQGGDPVSLKAWGLLCDQSRREFQKIYDRLDIRLSERGESFYNPYLASVLSGLKEADLLVTDDGAECVFLEGVNGKDGKPLPVIVRKSDGGFNYATTDLAAIRYRFALAPDGDGARRVIYVTDAGQANHFAGVFQVAKRANWIPEHGRLEHVPFGLVQGEDGKKLKTRSGDTVRLRDLLDEAVERAEADLRRRLEEEGRSEDDQFIEHVAGTVGLAAVKYADLSQNRITNYQFSFDRMLALQGNTAPYLLYAVVRIAGIARKGGDLEAEAGMLQFSEPQEWSLVRELLKFDAVIAEVEEELLPNRLCSYLFELSQVFNRFYDQVPVLKAEGQSLPSRLALCRLTADTLKSGLGLLGIATLERM.

The 'HIGH' region signature appears at 130 to 140 (PNIAKEMHVGH).

The protein belongs to the class-I aminoacyl-tRNA synthetase family. Monomer.

Its subcellular location is the cytoplasm. It catalyses the reaction tRNA(Arg) + L-arginine + ATP = L-arginyl-tRNA(Arg) + AMP + diphosphate. The sequence is that of Arginine--tRNA ligase from Synechococcus sp. (strain CC9311).